Consider the following 254-residue polypeptide: Low affinity immunoglobulin gamma Fc region receptor III-A (254 aa).

The N-terminal stretch at 1-20 is a signal peptide; it reads MWQLLLPTALLLLVSAGMRA. Residues 21 to 206 lie on the Extracellular side of the membrane; that stretch reads EDLPKAVVFL…SSISSFFPPG (186 aa). Ig-like C2-type domains follow at residues 24–105 and 107–189; these read PKAV…LEVH and GWLL…VNIT. 2 disulfides stabilise this stretch: C47-C89 and C128-C172. The N-linked (GlcNAc...) asparagine glycan is linked to N187. A helical membrane pass occupies residues 207-229; sequence YQVSFCLVMVLLFAVDTGLYFSV. The Cytoplasmic segment spans residues 230–254; sequence KKSVPSSTRDWEDHKFKWSKDPQDK.

In terms of assembly, forms a heterooligomeric complex with ITAM-containing signaling subunits, either a homodimer of CD247, a homodimer of FCER1G or a heterodimer of CD247 and FCER1G, to form a functional receptor complex. Interacts (via transmembrane domain) with signaling subunits; this interaction is a prerequisite for receptor complex expression on the cell surface and intracellular signal transduction. Binds the Fc region of antigen-complexed IgG with a preference for IgG1 and IgG3 isotypes. Interacts with CD2; this interaction is involved in NK cell activation and cytotoxicity. Interacts with S100A4; this interaction inhibits PKC-dependent phosphorylation of FCGR3A. Glycosylated. Glycosylation plays an inhibitory role in the interaction with IgG1 and IgG2. Post-translationally, undergoes rapid ectodomain shedding upon NK cell stimulation. The soluble form is produced by a proteolytic cleavage mediated by ADAM17. Repeated stimulation causes receptor shedding, a mechanism that allows for increased NK cell motility and detachment from opsonized target cells while avoiding activation-induced NK cell apoptosis. In terms of tissue distribution, lymphocytes and monocytes.

The protein localises to the cell membrane. The protein resides in the secreted. Receptor for the invariable Fc fragment of immunoglobulin gamma (IgG). Optimally activated upon binding of clustered antigen-IgG complexes displayed on cell surfaces, triggers lysis of antibody-coated cells, a process known as antibody-dependent cellular cytotoxicity (ADCC). Does not bind free monomeric IgG, thus avoiding inappropriate effector cell activation in the absence of antigenic trigger. Mediates IgG effector functions on natural killer (NK) cells. Binds antigen-IgG complexes generated upon infection and triggers NK cell-dependent cytokine production and degranulation to limit viral load and propagation. Involved in the generation of memory-like adaptive NK cells capable to produce high amounts of IFNG and to efficiently eliminate virus-infected cells via ADCC. Regulates NK cell survival and proliferation, in particular by preventing NK cell progenitor apoptosis. Fc-binding subunit that associates with CD247 and/or FCER1G adapters to form functional signaling complexes. Following the engagement of antigen-IgG complexes, triggers phosphorylation of immunoreceptor tyrosine-based activation motif (ITAM)-containing adapters with subsequent activation of phosphatidylinositol 3-kinase signaling and sustained elevation of intracellular calcium that ultimately drive NK cell activation. The ITAM-dependent signaling coupled to receptor phosphorylation by PKC mediates robust intracellular calcium flux that leads to production of pro-inflammatory cytokines, whereas in the absence of receptor phosphorylation it mainly activates phosphatidylinositol 3-kinase signaling leading to cell degranulation. Costimulates NK cells and trigger lysis of target cells independently of IgG binding. Mediates the antitumor activities of therapeutic antibodies. Upon ligation on monocytes triggers TNFA-dependent ADCC of IgG-coated tumor cells. Mediates enhanced ADCC in response to afucosylated IgGs. In Macaca mulatta (Rhesus macaque), this protein is Low affinity immunoglobulin gamma Fc region receptor III-A.